The following is a 563-amino-acid chain: Proline--tRNA ligase (563 aa).

This sequence belongs to the class-II aminoacyl-tRNA synthetase family. ProS type 1 subfamily. As to quaternary structure, homodimer.

It localises to the cytoplasm. It carries out the reaction tRNA(Pro) + L-proline + ATP = L-prolyl-tRNA(Pro) + AMP + diphosphate. In terms of biological role, catalyzes the attachment of proline to tRNA(Pro) in a two-step reaction: proline is first activated by ATP to form Pro-AMP and then transferred to the acceptor end of tRNA(Pro). As ProRS can inadvertently accommodate and process non-cognate amino acids such as alanine and cysteine, to avoid such errors it has two additional distinct editing activities against alanine. One activity is designated as 'pretransfer' editing and involves the tRNA(Pro)-independent hydrolysis of activated Ala-AMP. The other activity is designated 'posttransfer' editing and involves deacylation of mischarged Ala-tRNA(Pro). The misacylated Cys-tRNA(Pro) is not edited by ProRS. The polypeptide is Proline--tRNA ligase (Persephonella marina (strain DSM 14350 / EX-H1)).